The sequence spans 1788 residues: Laminin subunit beta-1 (1788 aa).

An N-terminal signal peptide occupies residues 1 to 24 (MLELRLIVVIVLALLSWQWDPVDS). The tract at residues 23–43 (DSQRPPQHGRRDRPKYPPNKF) is disordered. One can recognise a Laminin N-terminal domain in the interval 50-287 (ERSSCYPATG…GISNMVVRGS (238 aa)). Asn138, Asn201, and Asn232 each carry an N-linked (GlcNAc...) asparagine glycan. 19 disulfides stabilise this stretch: Cys288/Cys297, Cys290/Cys318, Cys320/Cys329, Cys332/Cys352, Cys355/Cys364, Cys357/Cys382, Cys385/Cys394, Cys397/Cys415, Cys418/Cys431, Cys420/Cys446, Cys448/Cys457, Cys460/Cys475, Cys478/Cys491, Cys480/Cys498, Cys500/Cys509, Cys512/Cys526, Cys529/Cys541, Cys531/Cys548, and Cys550/Cys559. 4 Laminin EGF-like domains span residues 288–354 (CSCY…ACKK), 355–417 (CECN…VCQP), 418–477 (CDCD…GCEP), and 478–528 (CTCN…GCSL). Asn487 carries an N-linked (GlcNAc...) asparagine glycan. One can recognise a Laminin EGF-like 5; truncated domain in the interval 529-559 (CNCDAGGSYDNYCDVISGQCRCRPHMTGRSC). Positions 567–783 (FIPLLPEVHE…LDNILSVFVH (217 aa)) constitute a Laminin IV type B domain. Asn591 is a glycosylation site (N-linked (GlcNAc...) asparagine). Positions 641 to 643 (RGD) match the Cell attachment site motif. Disulfide bonds link Cys789–Cys801, Cys791–Cys808, Cys810–Cys819, Cys822–Cys834, Cys837–Cys849, Cys839–Cys856, Cys858–Cys867, Cys870–Cys880, Cys883–Cys892, Cys885–Cys899, Cys902–Cys911, Cys914–Cys930, Cys933–Cys949, Cys935–Cys960, Cys962–Cys971, Cys974–Cys988, Cys991–Cys1005, Cys993–Cys1012, Cys1015–Cys1024, Cys1027–Cys1040, Cys1043–Cys1057, Cys1045–Cys1064, Cys1066–Cys1075, Cys1078–Cys1091, Cys1094–Cys1106, Cys1096–Cys1113, Cys1115–Cys1124, Cys1127–Cys1139, Cys1142–Cys1154, Cys1144–Cys1161, Cys1163–Cys1172, and Cys1175–Cys1186. 8 consecutive Laminin EGF-like domains span residues 789–836 (CNCN…GCKA), 837–882 (CDCN…ECRV), 883–932 (CQCN…GCRP), 933–990 (CRCP…TCSK), 991–1042 (CECS…NCQQ), 1043–1093 (CECD…GCES), 1094–1141 (CNCD…KCQP), and 1142–1188 (CECD…HCSP). N-linked (GlcNAc...) asparagine glycosylation is present at Asn1051. The domain II stretch occupies residues 1189-1405 (CGECFNNWDL…SQIPELNNQV (217 aa)). N-linked (GlcNAc...) asparagine glycosylation is found at Asn1246, Asn1301, Asn1330, and Asn1341. Residues 1255–1405 (EKLDYETQSL…SQIPELNNQV (151 aa)) are a coiled coil. The segment at 1406 to 1432 (CGKPGDPCDSLCGGAGCGHCGGFLSCE) is domain alpha. The segment at 1433–1788 (HGAKTHSEEA…RGSHYRQCYT (356 aa)) is domain I. The stretch at 1453-1505 (ITSKKDQADQTIRALTQAKLNASEAYEKAKRGFEQSERYLNQTNANIKLAENL) forms a coiled coil. N-linked (GlcNAc...) asparagine glycans are attached at residues Asn1473, Asn1493, and Asn1515. Residues 1540–1561 (EEIETLGDQINRAVSSLKNVEA) adopt a coiled-coil conformation. N-linked (GlcNAc...) asparagine glycosylation is found at Asn1581, Asn1644, and Asn1703. The stretch at 1608–1762 (QGKAKDAIQQ…QQLLRLQAEI (155 aa)) forms a coiled coil. Residues 1690–1719 (GEANNLQSATSATNQTLTDRASRSENARER) form a disordered region. Over residues 1693–1708 (NNLQSATSATNQTLTD) the composition is skewed to polar residues. Positions 1709–1719 (RASRSENARER) are enriched in basic and acidic residues.

In terms of assembly, laminin is a complex glycoprotein, consisting of three different polypeptide chains (alpha, beta, gamma), which are bound to each other by disulfide bonds into a cross-shaped molecule comprising one long and three short arms with globules at each end. In terms of tissue distribution, found in the basement membranes (major component).

It is found in the secreted. Its subcellular location is the extracellular space. It localises to the extracellular matrix. The protein localises to the basement membrane. Functionally, binding to cells via a high affinity receptor, laminin is thought to mediate the attachment, migration and organization of cells into tissues during embryonic development by interacting with other extracellular matrix components. Required for Ndg localization to the basement membrane. This chain is Laminin subunit beta-1 (LanB1), found in Drosophila melanogaster (Fruit fly).